The chain runs to 92 residues: Putative transmembrane protein ORF92 (92 aa).

3 consecutive transmembrane segments (helical) span residues 11 to 28 (FVKG…TYAI), 32 to 52 (FFSS…LFAS), and 54 to 74 (FLFD…IGVG).

The protein localises to the host membrane. The sequence is that of Putative transmembrane protein ORF92 from Acidianus convivator (ABV).